The chain runs to 113 residues: Endoribonuclease SymE (113 aa).

Residues 29 to 74 (SRYPDYSRIPAITLKGQWLEAAGFATGTAVDVKVMEGCIVLTAQPP) form the SpoVT-AbrB domain.

It belongs to the SymE family.

The protein resides in the cytoplasm. Involved in the degradation and recycling of damaged RNA. It is itself a target for degradation by the ATP-dependent protease Lon. This Escherichia coli (strain K12 / MC4100 / BW2952) protein is Endoribonuclease SymE.